Consider the following 465-residue polypeptide: Siroheme synthase (465 aa).

Residues 1–203 form a precorrin-2 dehydrogenase /sirohydrochlorin ferrochelatase region; that stretch reads MDFLPLFHSL…GRPAEAERLL (203 aa). NAD(+) contacts are provided by residues 22–23 and 43–44; these read EV and PQ. Ser128 is subject to Phosphoserine. The uroporphyrinogen-III C-methyltransferase stretch occupies residues 217 to 465; the sequence is GEVYLVGAGP…AWFEGAREDA (249 aa). Pro226 is a binding site for S-adenosyl-L-methionine. The active-site Proton acceptor is Asp249. Lys271 serves as the catalytic Proton donor. S-adenosyl-L-methionine-binding positions include 302 to 304, Ile307, 332 to 333, Met384, and Gly413; these read GGD and TA.

In the N-terminal section; belongs to the precorrin-2 dehydrogenase / sirohydrochlorin ferrochelatase family. The protein in the C-terminal section; belongs to the precorrin methyltransferase family.

The catalysed reaction is uroporphyrinogen III + 2 S-adenosyl-L-methionine = precorrin-2 + 2 S-adenosyl-L-homocysteine + H(+). It carries out the reaction precorrin-2 + NAD(+) = sirohydrochlorin + NADH + 2 H(+). The enzyme catalyses siroheme + 2 H(+) = sirohydrochlorin + Fe(2+). Its pathway is cofactor biosynthesis; adenosylcobalamin biosynthesis; precorrin-2 from uroporphyrinogen III: step 1/1. The protein operates within cofactor biosynthesis; adenosylcobalamin biosynthesis; sirohydrochlorin from precorrin-2: step 1/1. It functions in the pathway porphyrin-containing compound metabolism; siroheme biosynthesis; precorrin-2 from uroporphyrinogen III: step 1/1. It participates in porphyrin-containing compound metabolism; siroheme biosynthesis; siroheme from sirohydrochlorin: step 1/1. Its pathway is porphyrin-containing compound metabolism; siroheme biosynthesis; sirohydrochlorin from precorrin-2: step 1/1. Functionally, multifunctional enzyme that catalyzes the SAM-dependent methylations of uroporphyrinogen III at position C-2 and C-7 to form precorrin-2 via precorrin-1. Then it catalyzes the NAD-dependent ring dehydrogenation of precorrin-2 to yield sirohydrochlorin. Finally, it catalyzes the ferrochelation of sirohydrochlorin to yield siroheme. This chain is Siroheme synthase, found in Pseudomonas aeruginosa (strain ATCC 15692 / DSM 22644 / CIP 104116 / JCM 14847 / LMG 12228 / 1C / PRS 101 / PAO1).